The primary structure comprises 85 residues: Large ribosomal subunit protein bL27 (85 aa).

The interval Met1–Gly22 is disordered.

This sequence belongs to the bacterial ribosomal protein bL27 family.

This Nitrosomonas europaea (strain ATCC 19718 / CIP 103999 / KCTC 2705 / NBRC 14298) protein is Large ribosomal subunit protein bL27.